The sequence spans 507 residues: CWF19-like protein DRN1 (507 aa).

Position 242 is a phosphoserine (serine 242).

This sequence belongs to the CWF19 family. As to quaternary structure, interacts with DBR1. Interacts with SYF1, a component of the NTC complex. Interacts with lariat-introns and lariat-intermediates.

Its subcellular location is the nucleus. The protein resides in the cytoplasm. Functionally, involved in branched RNA metabolism, modulating the turnover of lariat-intron pre-mRNAs by the lariat-debranching enzyme DBR1. Enhances the debranching activity of DBR1 in vitro. The protein is CWF19-like protein DRN1 (DRN1) of Saccharomyces cerevisiae (strain ATCC 204508 / S288c) (Baker's yeast).